We begin with the raw amino-acid sequence, 714 residues long: Mitochondrial division protein 1 (714 aa).

Positions 240 to 298 (LNIQKNSTLSEIRDIEVEVENLRQKKEKLLGKIANIEQNQLLLEDNLKQIDDRLDFLEE) form a coiled coil. The disordered stretch occupies residues 323 to 354 (LKNDAIRNEGVTTESISSEASNLPPRRRQQLR). Positions 332-343 (GVTTESISSEAS) are enriched in polar residues. Ser376 carries the post-translational modification Phosphoserine. 7 WD repeats span residues 396 to 436 (THDD…KIGE), 439 to 478 (GHLA…QLYQ), 500 to 539 (AHTD…QTID), 561 to 603 (TQRN…RTLK), 604 to 642 (GHTD…NKFH), 644 to 681 (YSAP…SWSC), and 685 to 714 (GNET…IWAV).

It belongs to the WD repeat MDV1/CAF4 family. As to quaternary structure, interacts with CAF4, DNM1 and FIS1, components of the mitochondrial fission machinery. Interacts via its N-terminal, coiled-coil extension (NTE) with FIS1, and via its WD repeats with DNM1.

The protein localises to the mitochondrion outer membrane. Involved in mitochondrial fission. Has a partially redundant function to CAF4 in acting as an adapter protein, binding to FIS1 on the mitochondrial outer membrane and recruiting the dynamin-like GTPase DNM1 to form mitochondrial fission complexes. Formation of these complexes is required to promote constriction and fission of the mitochondrial compartment at a late step in mitochondrial division. The sequence is that of Mitochondrial division protein 1 (MDV1) from Saccharomyces cerevisiae (strain YJM789) (Baker's yeast).